Reading from the N-terminus, the 314-residue chain is Probable 5-dehydro-4-deoxyglucarate dehydratase (314 aa).

Belongs to the DapA family.

It carries out the reaction 5-dehydro-4-deoxy-D-glucarate + H(+) = 2,5-dioxopentanoate + CO2 + H2O. The protein operates within carbohydrate acid metabolism; D-glucarate degradation; 2,5-dioxopentanoate from D-glucarate: step 2/2. The chain is Probable 5-dehydro-4-deoxyglucarate dehydratase from Bradyrhizobium diazoefficiens (strain JCM 10833 / BCRC 13528 / IAM 13628 / NBRC 14792 / USDA 110).